The primary structure comprises 218 residues: Glutathione S-transferase Mu 1 (218 aa).

Residues 2–88 (PMILGYWNVR…YLARKHHLCG (87 aa)) form the GST N-terminal domain. Glutathione contacts are provided by residues 7–8 (YW), 43–46 (RSQW), K50, and 59–60 (NL). A Phosphoserine modification is found at S67. 72 to 73 (QS) lines the glutathione pocket. The region spanning 90-208 (TEEERIRADI…KSSRYLSTPI (119 aa)) is the GST C-terminal domain. Y116 lines the substrate pocket. Phosphoserine occurs at positions 205 and 210.

Belongs to the GST superfamily. Mu family. As to quaternary structure, homodimer or heterodimer.

Its subcellular location is the cytoplasm. It catalyses the reaction RX + glutathione = an S-substituted glutathione + a halide anion + H(+). The catalysed reaction is prostaglandin A2 + glutathione = prostaglandin A2-S-(R)-glutathione. It carries out the reaction prostaglandin J2 + glutathione = prostaglandin J2-S-(R)-glutathione. The enzyme catalyses prostaglandin J2 + glutathione = prostaglandin J2-S-(S)-glutathione. It catalyses the reaction prostaglandin A2 + glutathione = prostaglandin A2-S-(S)-glutathione. The catalysed reaction is 11(S)-hydroxy-14(S),15(S)-epoxy-(5Z,8Z,12E)-eicosatrienoate + glutathione = (11S,15S)-dihydroxy-14(R)-S-glutathionyl-(5Z,8Z,12E)-eicosatrienoate. Its function is as follows. Conjugation of reduced glutathione to a wide number of exogenous and endogenous hydrophobic electrophiles. The olfactory GST may be crucial for the acuity of the olfactory process. Participates in the formation of novel hepoxilin regioisomers. This chain is Glutathione S-transferase Mu 1, found in Rattus norvegicus (Rat).